A 188-amino-acid chain; its full sequence is UPF0301 protein PsycPRwf_0144 (188 aa).

It belongs to the UPF0301 (AlgH) family.

The polypeptide is UPF0301 protein PsycPRwf_0144 (Psychrobacter sp. (strain PRwf-1)).